A 168-amino-acid polypeptide reads, in one-letter code: Secretory-abundant heat soluble protein 33020 (168 aa).

The first 19 residues, 1–19 (MARFLVALALFGVVAMTAA), serve as a signal peptide directing secretion. Residues 26-57 (EWSGKPWLGKFVAEVSDKSENWEAFVDALGLP) are SAHS-c1. An SAHS-c2 region spans residues 72–100 (YKQGEHYHHILSLPDKNINKDIEFTLGQE). The SAHS-c3 stretch occupies residues 113–162 (KYFEDGNKLVADVSIPAKGKSIHDVYDVQGDQLIKSYKVGDVVAKKWFKK).

This sequence belongs to the Secretory-abundant heat soluble protein (SAHS) family.

The protein resides in the secreted. In terms of biological role, secreted heat soluble protein acting as a molecular shield in water-deficient condition. Tardigrade-specific intrinsically disordered proteins (TDPs) are essential for desiccation tolerance by forming non-crystalline amorphous solids upon desiccation, and this vitrified state mirrors their protective capabilities. The sequence is that of Secretory-abundant heat soluble protein 33020 from Hypsibius exemplaris (Freshwater tardigrade).